The following is a 58-amino-acid chain: Histatherin (58 aa).

Residues 1–19 form the signal peptide; sequence MKIFIFIFIMALILAMIRA.

It belongs to the histatin/statherin family. In terms of tissue distribution, expressed in mammary glands.

The protein resides in the secreted. This is Histatherin from Bos taurus (Bovine).